Here is a 639-residue protein sequence, read N- to C-terminus: UvrABC system protein C (639 aa).

The GIY-YIG domain occupies 20–97 (ERSGVYRMFD…IKKFQPKFNI (78 aa)). In terms of domain architecture, UVR spans 207–242 (KELQENLSRKMEELSSQMRFEEAAEIRDRIKALSYV).

It belongs to the UvrC family. In terms of assembly, interacts with UvrB in an incision complex.

It localises to the cytoplasm. The UvrABC repair system catalyzes the recognition and processing of DNA lesions. UvrC both incises the 5' and 3' sides of the lesion. The N-terminal half is responsible for the 3' incision and the C-terminal half is responsible for the 5' incision. The protein is UvrABC system protein C of Rickettsia rickettsii (strain Iowa).